The chain runs to 89 residues: Large ribosomal subunit protein bL27 (89 aa).

Residues 1–23 (MAHKKAGGSSRNGRDSAGKRLGI) are disordered.

This sequence belongs to the bacterial ribosomal protein bL27 family.

The polypeptide is Large ribosomal subunit protein bL27 (Rhodopseudomonas palustris (strain BisA53)).